We begin with the raw amino-acid sequence, 154 residues long: Transcriptional repressor NrdR (154 aa).

A zinc finger lies at 3–34; it reads CPFCSAHDTKVIDSRLVAEGDQVRRRRECQAC. Residues 49-139 form the ATP-cone domain; sequence PRVIKQDGSR…VYRRFQDLNE (91 aa).

Belongs to the NrdR family. Requires Zn(2+) as cofactor.

Functionally, negatively regulates transcription of bacterial ribonucleotide reductase nrd genes and operons by binding to NrdR-boxes. In Azotobacter vinelandii (strain DJ / ATCC BAA-1303), this protein is Transcriptional repressor NrdR.